The primary structure comprises 702 residues: Elongation factor G (702 aa).

Residues 9–292 (DRTRNIGIMA…AVVDYLPSPL (284 aa)) form the tr-type G domain. GTP is bound by residues 18–25 (AHIDAGKT), 91–95 (DTPGH), and 145–148 (NKMD).

Belongs to the TRAFAC class translation factor GTPase superfamily. Classic translation factor GTPase family. EF-G/EF-2 subfamily.

It is found in the cytoplasm. Its function is as follows. Catalyzes the GTP-dependent ribosomal translocation step during translation elongation. During this step, the ribosome changes from the pre-translocational (PRE) to the post-translocational (POST) state as the newly formed A-site-bound peptidyl-tRNA and P-site-bound deacylated tRNA move to the P and E sites, respectively. Catalyzes the coordinated movement of the two tRNA molecules, the mRNA and conformational changes in the ribosome. The protein is Elongation factor G of Oenococcus oeni (strain ATCC BAA-331 / PSU-1).